Reading from the N-terminus, the 367-residue chain is Phosphoribosylaminoimidazole-succinocarboxamide synthase (367 aa).

It belongs to the SAICAR synthetase family.

The enzyme catalyses 5-amino-1-(5-phospho-D-ribosyl)imidazole-4-carboxylate + L-aspartate + ATP = (2S)-2-[5-amino-1-(5-phospho-beta-D-ribosyl)imidazole-4-carboxamido]succinate + ADP + phosphate + 2 H(+). The protein operates within purine metabolism; IMP biosynthesis via de novo pathway; 5-amino-1-(5-phospho-D-ribosyl)imidazole-4-carboxamide from 5-amino-1-(5-phospho-D-ribosyl)imidazole-4-carboxylate: step 1/2. This chain is Phosphoribosylaminoimidazole-succinocarboxamide synthase, found in Vibrio vulnificus (strain CMCP6).